A 196-amino-acid chain; its full sequence is UPF0314 protein Oant_0840 (196 aa).

4 consecutive transmembrane segments (helical) span residues 15-35 (WGLG…WLYF), 65-85 (WYTL…TVIA), 127-147 (FGDS…GFLI), and 151-171 (LPTK…LIVI).

The protein belongs to the UPF0314 family.

The protein localises to the cell membrane. The chain is UPF0314 protein Oant_0840 from Brucella anthropi (strain ATCC 49188 / DSM 6882 / CCUG 24695 / JCM 21032 / LMG 3331 / NBRC 15819 / NCTC 12168 / Alc 37) (Ochrobactrum anthropi).